Consider the following 38-residue polypeptide: Large ribosomal subunit protein bL36 (38 aa).

This sequence belongs to the bacterial ribosomal protein bL36 family.

This Phytoplasma mali (strain AT) protein is Large ribosomal subunit protein bL36.